A 552-amino-acid chain; its full sequence is BAR/IMD domain-containing adapter protein 2 (552 aa).

Positions 1 to 250 constitute an IMD domain; sequence MSLSRSEEMH…VQLMQQVASN (250 aa). The stretch at 132–153 forms a coiled coil; sequence DALDKCQAELKKLRKKSQGSKN. Position 261 is a phosphoserine (serine 261). A disordered region spans residues 295–369; that stretch reads STPIMNGVTG…TLPRSSSMAA (75 aa). Threonine 296 carries the phosphothreonine modification. A compositionally biased stretch (low complexity) spans 320–334; it reads QPKSLSPPQSQSKLS. Phosphoserine is present on residues serine 323, serine 325, and serine 336. Position 340 is a phosphothreonine (threonine 340). Serine 346 carries the post-translational modification Phosphoserine. The segment covering 348–367 has biased composition (polar residues); that stretch reads TPKNSYATTENKTLPRSSSM. Threonine 360 carries the phosphothreonine modification. Residues serine 366, serine 384, serine 395, and serine 454 each carry the phosphoserine modification. Residues 374-437 enclose the SH3 domain; it reads NGRMRVKAIF…PFSYTRVLDS (64 aa). Residues 447-457 are compositionally biased toward polar residues; that stretch reads LQQGKSSSTGN. 2 disordered regions span residues 447-466 and 525-552; these read LQQGKSSSTGNLLDKDDLAI and TNDRCDLSAQGPEGREHGDGSARTLAGR.

As to quaternary structure, homodimer. Interacts with CDC42 and RAC1 that have been activated by GTP binding. Interacts with ATN1, ADGRB1, EPS8, SHANK1, SHANK2, SHANK3, WASF1 and WASF2. Interacts with ENAH after recruitment of CDC42. Interacts with TIAM1 and DIAPH1. Interacts (via SH3 domain) with E.coli effector protein EspF(U) (via PXXP motifs). Interacts with E.coli intimin receptor Tir. Phosphorylated on tyrosine residues by INSR in response to insulin treatment. Isoform 1 and isoform 4 are expressed almost exclusively in brain. Isoform 4 is barely detectable in placenta, prostate and testis. A short isoform is ubiquitous, with the highest expression in liver, prostate, testis and placenta.

It is found in the cytoplasm. The protein resides in the membrane. It localises to the cell projection. The protein localises to the filopodium. Its subcellular location is the ruffle. It is found in the cytoskeleton. Adapter protein that links membrane-bound small G-proteins to cytoplasmic effector proteins. Necessary for CDC42-mediated reorganization of the actin cytoskeleton and for RAC1-mediated membrane ruffling. Involved in the regulation of the actin cytoskeleton by WASF family members and the Arp2/3 complex. Plays a role in neurite growth. Acts syngeristically with ENAH to promote filipodia formation. Plays a role in the reorganization of the actin cytoskeleton in response to bacterial infection. Participates in actin bundling when associated with EPS8, promoting filopodial protrusions. In Homo sapiens (Human), this protein is BAR/IMD domain-containing adapter protein 2 (BAIAP2).